The following is a 260-amino-acid chain: Uroplakin-1b (260 aa).

Over 1-15 (MAKDNSTVRCFQGLL) the chain is Cytoplasmic. The chain crosses the membrane as a helical span at residues 16-36 (IFGNVIIGCCGIALTAECIFF). The Extracellular segment spans residues 37–60 (VSDQHSLYPLLEATDNDDIYGAAW). Residues 61-81 (IGIFVGICLFCLSVLGIVGIM) form a helical membrane-spanning segment. Over 82-86 (KSSRK) the chain is Cytoplasmic. Residues 87–107 (ILLAYFILMFIVYAFEVASCI) form a helical membrane-spanning segment. The Extracellular portion of the chain corresponds to 108–229 (TAATQQDFFT…ELISGPMNRH (122 aa)). Residues 230 to 250 (AWGVAWFGFAILCWTFWVLLG) form a helical membrane-spanning segment. Over 251–260 (TMFYWSRIEY) the chain is Cytoplasmic.

Belongs to the tetraspanin (TM4SF) family. As to quaternary structure, heterodimer with uroplakin-3A (UPK3A) or uroplakin-3B (UPK3B). Post-translationally, N-glycosylated with high-mannose oligosaccharides. As to expression, bladder epithelium.

The protein resides in the membrane. Its function is as follows. Component of the asymmetric unit membrane (AUM); a highly specialized biomembrane elaborated by terminally differentiated urothelial cells. May play an important role in normal bladder epithelial physiology, possibly in regulating membrane permeability of superficial umbrella cells or in stabilizing the apical membrane through AUM/cytoskeletal interactions. This is Uroplakin-1b (UPK1B) from Homo sapiens (Human).